The following is a 406-amino-acid chain: Tryptophan 2,3-dioxygenase (406 aa).

Substrate contacts are provided by residues 72-76 (FIVTH) and R144. Residue H328 coordinates heme. T342 is a binding site for substrate.

The protein belongs to the tryptophan 2,3-dioxygenase family. As to quaternary structure, homotetramer. Dimer of dimers. The cofactor is heme.

It carries out the reaction L-tryptophan + O2 = N-formyl-L-kynurenine. Its pathway is amino-acid degradation; L-tryptophan degradation via kynurenine pathway; L-kynurenine from L-tryptophan: step 1/2. Its function is as follows. Heme-dependent dioxygenase that catalyzes the oxidative cleavage of the L-tryptophan (L-Trp) pyrrole ring and converts L-tryptophan to N-formyl-L-kynurenine. Catalyzes the oxidative cleavage of the indole moiety. The sequence is that of Tryptophan 2,3-dioxygenase from Xenopus tropicalis (Western clawed frog).